Here is a 184-residue protein sequence, read N- to C-terminus: Translation initiation factor IF-3 (184 aa).

The protein belongs to the IF-3 family. In terms of assembly, monomer.

The protein localises to the cytoplasm. Its function is as follows. IF-3 binds to the 30S ribosomal subunit and shifts the equilibrium between 70S ribosomes and their 50S and 30S subunits in favor of the free subunits, thus enhancing the availability of 30S subunits on which protein synthesis initiation begins. In Mycoplasma genitalium (strain ATCC 33530 / DSM 19775 / NCTC 10195 / G37) (Mycoplasmoides genitalium), this protein is Translation initiation factor IF-3.